An 883-amino-acid chain; its full sequence is Serine/threonine-protein phosphatase BSL1 homolog (883 aa).

Kelch repeat units follow at residues 64–113 (ASSG…AVGT), 221–271 (MLLL…VFVG), 273–323 (RLHV…DHDA), and 341–387 (QIYI…NRNH). Disordered stretches follow at residues 381–402 (ENQNRNHNFNSDSPTTNNSTDK), 430–466 (SHASSEDSLSEGIGSESPLSETSPMPEDLDDGGSLEP), and 499–525 (NESRRMHPSSNDQSYPAKKALNRQRSP). Residues 385-399 (RNHNFNSDSPTTNNS) are compositionally biased toward polar residues. Residues aspartate 586, histidine 588, aspartate 620, and asparagine 652 each coordinate Mn(2+). Catalysis depends on histidine 653, which acts as the Proton donor. The Mn(2+) site is built by histidine 705 and histidine 784. The segment at 861 to 883 (QRPPTPTRGRPQSASDRNSLAYI) is disordered. Residues 872–883 (QSASDRNSLAYI) show a composition bias toward polar residues.

The protein belongs to the PPP phosphatase family. BSU subfamily. As to quaternary structure, interacts with the phosphorylated form of BSK3. Requires Mn(2+) as cofactor.

Its subcellular location is the nucleus. The enzyme catalyses O-phospho-L-seryl-[protein] + H2O = L-seryl-[protein] + phosphate. The catalysed reaction is O-phospho-L-threonyl-[protein] + H2O = L-threonyl-[protein] + phosphate. The sequence is that of Serine/threonine-protein phosphatase BSL1 homolog (BSL1) from Oryza sativa subsp. japonica (Rice).